A 105-amino-acid chain; its full sequence is Death-associated protein 1 homolog (105 aa).

The disordered stretch occupies residues 75–105 (AAQVAHQKPVPSAQKLPAGQHLNQHIHQPRK). Over residues 95–105 (HLNQHIHQPRK) the composition is skewed to polar residues.

Belongs to the DAP-DAPL1 family. Associates with ribosomes; inhibiting translation. Interacts with eiF5a (eif5a and eif5a2); inhibiting translation.

Its function is as follows. Ribosome-binding protein involved in ribosome hibernation, a process during which ribosomes are stabilized in an inactive state and preserved from proteasomal degradation. Acts via its association with eiF5a (eif5a and eif5a2) at the polypeptide exit tunnel of the ribosome, preventing mRNA translation. Involved in ribosome hibernation in the mature egg by preventing mRNA translation, leading to ribosome inactivation. Ribosomes, which are produced in large quantities during oogenesis, are stored and translationally repressed in the egg and early embryo. Compared to dap1b, binds and inactivates ribosomes less efficiently. The polypeptide is Death-associated protein 1 homolog (Danio rerio (Zebrafish)).